The primary structure comprises 973 residues: Leucine--tRNA ligase, chloroplastic/mitochondrial (973 aa).

The short motif at 126 to 135 (PSGAGLHVGH) is the 'HIGH' region element. The 'KMSKS' region motif lies at 730 to 734 (KMSKS). K733 is a binding site for ATP.

This sequence belongs to the class-I aminoacyl-tRNA synthetase family.

The protein localises to the plastid. It is found in the chloroplast. The protein resides in the mitochondrion. The enzyme catalyses tRNA(Leu) + L-leucine + ATP = L-leucyl-tRNA(Leu) + AMP + diphosphate. Its function is as follows. Catalyzes the specific attachment of an amino acid to its cognate tRNA in a two step reaction: the amino acid (AA) is first activated by ATP to form AA-AMP and then transferred to the acceptor end of the tRNA. This Arabidopsis thaliana (Mouse-ear cress) protein is Leucine--tRNA ligase, chloroplastic/mitochondrial.